The sequence spans 426 residues: Histidine--tRNA ligase (426 aa).

Belongs to the class-II aminoacyl-tRNA synthetase family.

Its subcellular location is the cytoplasm. It catalyses the reaction tRNA(His) + L-histidine + ATP = L-histidyl-tRNA(His) + AMP + diphosphate + H(+). This Saccharolobus islandicus (strain Y.G.57.14 / Yellowstone #1) (Sulfolobus islandicus) protein is Histidine--tRNA ligase.